Consider the following 431-residue polypeptide: Forkhead box protein P3 (431 aa).

Residues 1 to 68 are disordered; it reads MPNPRPGKPS…SSLNPMPPSQ (68 aa). The segment covering 10 to 25 has biased composition (low complexity); it reads SAPSLALGPSPGASPS. At Ser-19 the chain carries Phosphoserine; by CDK2. Lys-31 carries the N6-acetyllysine modification. The Nuclear export signal signature appears at 68–76; that stretch reads QLQLPTLPL. An LXXLL motif motif is present at residues 92-96; the sequence is LQALL. Positions 106-190 are essential for transcriptional repressor activity and for interaction with KAT5 and HDAC7; sequence LSTVDAHART…STLSAVPQSS (85 aa). Residues 106 to 198 are interaction with ZFP90; the sequence is LSTVDAHART…SSYPLLANGV (93 aa). The tract at residues 149–199 is interaction with IKZF4; that stretch reads LPPGINVASLEWVSREPALLCTFPNPSAPRKDSTLSAVPQSSYPLLANGVC. Residues 197-222 form a C2H2-type zinc finger; that stretch reads GVCKWPGCEKVFEEPEDFLKHCQADH. A Nuclear export signal motif is present at residues 239-248; sequence VQSLEQQLVL. Positions 239–260 are leucine-zipper; it reads VQSLEQQLVLEKEKLSAMQAHL. Residues Lys-250 and Lys-252 each participate in a glycyl lysine isopeptide (Lys-Gly) (interchain with G-Cter in ubiquitin) cross-link. An N6-acetyllysine; alternate mark is found at Lys-263 and Lys-268. Residues Lys-263 and Lys-268 each participate in a glycyl lysine isopeptide (Lys-Gly) (interchain with G-Cter in ubiquitin); alternate cross-link. The tract at residues 278 to 336 is interaction with RUNX1; it reads GSCCIVAAGSQGPVVPAWSGPREAPDSLFAVRRHLWGSHGNSTFPEFLHNMDYFKFHNM. A DNA-binding region (fork-head) is located at residues 337–423; that stretch reads RPPFTYATLI…RKKRSQRPSR (87 aa). Lys-393 participates in a covalent cross-link: Glycyl lysine isopeptide (Lys-Gly) (interchain with G-Cter in ubiquitin). The Nuclear localization signal signature appears at 414 to 417; sequence RKKR. Ser-418 carries the phosphoserine modification. Positions 418-431 are excised as a propeptide; it reads SQRPSRCSNPTPGP.

As to quaternary structure, homodimer. Dimerization is essential for its transcriptional regulator activity. Interacts with IKZF3. Isoform 1 (via LXXLL motif), but not isoform 2, interacts with isoform 4 of RORA (via AF-2 motif). Interacts with STUB1, HSPA8 and HSPA1A/B. Interacts with PPP1CA, PPP1CB and PPP1CG. Interacts with KAT5 and HDAC7. Interacts with HDAC9 in the absence of T-cell stimulation. Interacts with USP7. Interacts with isoform 2 of ZFP90 and can form a complex with TRIM28 in the presence of isoform 2 of ZFP90. Interacts with RUNX1. Interacts with RORC. Interacts with RELA and NFATC2. Interacts with RUNX2, RUNX3 and IKZF4. Post-translationally, polyubiquitinated, leading to its proteasomal degradation in regulatory T-cells (Treg) which is mediated by STUB1 in a HSPA1A/B-dependent manner. Deubiquitinated by USP7 and USP44; leading to increase in protein stability. In terms of processing, phosphorylation at Ser-418 regulates its transcriptional repressor activity and consequently, regulatory T-cells (Treg) suppressive function. Dephosphorylated at Ser-418 by protein phosphatase 1 (PP1) in Treg cells derived from patients with rheumatoid arthritis. Phosphorylation by CDK2 negatively regulates its transcriptional activity and protein stability. Acetylation on lysine residues stabilizes FOXP3 and promotes differentiation of T-cells into induced regulatory T-cells (iTregs) associated with suppressive functions. Acetylation is mediated by a coordinated action of KAT5 and EP300/p300 acetyltransferases: EP300/p300 is required to enhance KAT5 autoacetylation, promoting acetylation of FOXP3 by KAT5. Deacetylated by SIRT1. Post-translationally, undergoes proteolytic cleavage in activated regulatory T-cells (Treg), and can be cleaved at either the N- or C-terminal site, or at both sites.

It localises to the nucleus. The protein resides in the cytoplasm. Its function is as follows. Transcriptional regulator which is crucial for the development and inhibitory function of regulatory T-cells (Treg). Plays an essential role in maintaining homeostasis of the immune system by allowing the acquisition of full suppressive function and stability of the Treg lineage, and by directly modulating the expansion and function of conventional T-cells. Can act either as a transcriptional repressor or a transcriptional activator depending on its interactions with other transcription factors, histone acetylases and deacetylases. The suppressive activity of Treg involves the coordinate activation of many genes, including CTLA4 and TNFRSF18 by FOXP3 along with repression of genes encoding cytokines such as interleukin-2 (IL2) and interferon-gamma (IFNG). Inhibits cytokine production and T-cell effector function by repressing the activity of two key transcription factors, RELA and NFATC2. Mediates transcriptional repression of IL2 via its association with histone acetylase KAT5 and histone deacetylase HDAC7. Can activate the expression of TNFRSF18, IL2RA and CTLA4 and repress the expression of IL2 and IFNG via its association with transcription factor RUNX1. Inhibits the differentiation of IL17 producing helper T-cells (Th17) by antagonizing RORC function, leading to down-regulation of IL17 expression, favoring Treg development. Inhibits the transcriptional activator activity of RORA. Can repress the expression of IL2 and IFNG via its association with transcription factor IKZF4. The polypeptide is Forkhead box protein P3 (FOXP3) (Homo sapiens (Human)).